A 425-amino-acid chain; its full sequence is SWI5-dependent HO expression protein 3 (425 aa).

The interval 24–45 is disordered; the sequence is NLESSPTKDRNTSSQNASSSRV. The span at 35–45 shows a compositional bias: polar residues; it reads TSSQNASSSRV. A coiled-coil region spans residues 68 to 197; sequence QNLLSKLELA…LELSNQNLNY (130 aa). Residues 322–425 form a disordered region; sequence RKTPNTNDSS…NSMVVHGAQS (104 aa). A compositionally biased stretch (low complexity) spans 326–338; sequence NTNDSSSNGNSSN. S343 is subject to Phosphoserine. Polar residues-rich tracts occupy residues 345-358 and 382-397; these read YTAS…SIPK and KTNV…SPTI. Phosphoserine is present on S394.

This sequence belongs to the SHE3 family. Interacts with SHE2 and MYO4.

It localises to the endoplasmic reticulum membrane. RNA-binding protein that binds specific mRNAs including the ASH1 mRNA, coding for a repressor of the HO endonuclease. Part of the mRNA localization machinery that restricts accumulation of certain proteins to the bud and in the daughter cell. Required for the delivery of cortical endoplasmic reticulum into the emerging bud. The polypeptide is SWI5-dependent HO expression protein 3 (SHE3) (Saccharomyces cerevisiae (strain ATCC 204508 / S288c) (Baker's yeast)).